The sequence spans 245 residues: 1-(5-phosphoribosyl)-5-[(5-phosphoribosylamino)methylideneamino] imidazole-4-carboxamide isomerase (245 aa).

Aspartate 11 serves as the catalytic Proton acceptor. The active-site Proton donor is the aspartate 132.

This sequence belongs to the HisA/HisF family.

The protein localises to the cytoplasm. The enzyme catalyses 1-(5-phospho-beta-D-ribosyl)-5-[(5-phospho-beta-D-ribosylamino)methylideneamino]imidazole-4-carboxamide = 5-[(5-phospho-1-deoxy-D-ribulos-1-ylimino)methylamino]-1-(5-phospho-beta-D-ribosyl)imidazole-4-carboxamide. It participates in amino-acid biosynthesis; L-histidine biosynthesis; L-histidine from 5-phospho-alpha-D-ribose 1-diphosphate: step 4/9. This is 1-(5-phosphoribosyl)-5-[(5-phosphoribosylamino)methylideneamino] imidazole-4-carboxamide isomerase from Xanthobacter autotrophicus (strain ATCC BAA-1158 / Py2).